A 487-amino-acid chain; its full sequence is Glutamate--tRNA ligase (487 aa).

The 'HIGH' region motif lies at Pro-11–Asn-21. Residues Cys-108, Cys-110, Cys-135, and Asp-137 each coordinate Zn(2+). The 'KMSKS' region motif lies at Lys-245–Arg-249. Lys-248 contacts ATP.

The protein belongs to the class-I aminoacyl-tRNA synthetase family. Glutamate--tRNA ligase type 1 subfamily. Monomer. Requires Zn(2+) as cofactor.

The protein resides in the cytoplasm. The catalysed reaction is tRNA(Glu) + L-glutamate + ATP = L-glutamyl-tRNA(Glu) + AMP + diphosphate. Catalyzes the attachment of glutamate to tRNA(Glu) in a two-step reaction: glutamate is first activated by ATP to form Glu-AMP and then transferred to the acceptor end of tRNA(Glu). In Dehalococcoides mccartyi (strain ATCC BAA-2100 / JCM 16839 / KCTC 5957 / BAV1), this protein is Glutamate--tRNA ligase.